A 282-amino-acid polypeptide reads, in one-letter code: Elongation factor Ts (282 aa).

The interval 79 to 82 (TDFV) is involved in Mg(2+) ion dislocation from EF-Tu.

The protein belongs to the EF-Ts family.

The protein localises to the cytoplasm. In terms of biological role, associates with the EF-Tu.GDP complex and induces the exchange of GDP to GTP. It remains bound to the aminoacyl-tRNA.EF-Tu.GTP complex up to the GTP hydrolysis stage on the ribosome. The protein is Elongation factor Ts of Shewanella piezotolerans (strain WP3 / JCM 13877).